The following is a 92-amino-acid chain: Turripeptide UID-02 (92 aa).

An N-terminal signal peptide occupies residues 1 to 21 (MGFYMLLTVALLLTSLMNVEA). Residues 22 to 39 (TPVDQAERSALEKSGLGN) constitute a propeptide that is removed on maturation.

In terms of tissue distribution, expressed by the venom duct.

The protein resides in the secreted. The polypeptide is Turripeptide UID-02 (Gemmula speciosa (Splendid gem-turris)).